We begin with the raw amino-acid sequence, 280 residues long: Probable endonuclease 4 (280 aa).

The Zn(2+) site is built by His69, His109, Glu145, Asp179, His182, His216, Asp229, His231, and Glu261.

This sequence belongs to the AP endonuclease 2 family. Zn(2+) is required as a cofactor.

The enzyme catalyses Endonucleolytic cleavage to 5'-phosphooligonucleotide end-products.. In terms of biological role, endonuclease IV plays a role in DNA repair. It cleaves phosphodiester bonds at apurinic or apyrimidinic (AP) sites, generating a 3'-hydroxyl group and a 5'-terminal sugar phosphate. The polypeptide is Probable endonuclease 4 (Actinobacillus pleuropneumoniae serotype 5b (strain L20)).